A 504-amino-acid polypeptide reads, in one-letter code: uncharacterized protein (504 aa).

Disordered stretches follow at residues 1 to 59 (MSSS…KNEY) and 171 to 255 (GVNS…NQRL). Basic and acidic residues-rich tracts occupy residues 36 to 50 (KPID…KEIG) and 199 to 212 (RAET…ESRQ). Polar residues predominate over residues 213–232 (SNRGNNDNGDQRMTSKATTR).

This is an uncharacterized protein from Caenorhabditis elegans.